The chain runs to 544 residues: Probable protein kinase UbiB (544 aa).

A Protein kinase domain is found at 123–501 (DFDIKPLASA…KRQQGTGKFL (379 aa)). ATP-binding positions include 129 to 137 (LASASIAQV) and Lys-152. Asp-287 acts as the Proton acceptor in catalysis. A run of 2 helical transmembrane segments spans residues 496 to 516 (GTGK…AIWI) and 519 to 539 (QLEP…LLSW).

The protein belongs to the ABC1 family. UbiB subfamily.

It localises to the cell inner membrane. It functions in the pathway cofactor biosynthesis; ubiquinone biosynthesis [regulation]. Functionally, is probably a protein kinase regulator of UbiI activity which is involved in aerobic coenzyme Q (ubiquinone) biosynthesis. This Vibrio cholerae serotype O1 (strain ATCC 39315 / El Tor Inaba N16961) protein is Probable protein kinase UbiB.